Here is a 442-residue protein sequence, read N- to C-terminus: Adenylosuccinate synthetase (442 aa).

Residues 16-22 (GDEGKGK) and 44-46 (GHT) contribute to the GTP site. Aspartate 17 functions as the Proton acceptor in the catalytic mechanism. Positions 17 and 44 each coordinate Mg(2+). IMP-binding positions include 17–20 (DEGK), 42–45 (NAGH), threonine 133, arginine 147, glutamine 228, threonine 243, and arginine 307. Residue histidine 45 is the Proton donor of the active site. 303–309 (AVTGRPR) is a binding site for substrate. GTP-binding positions include arginine 309, 335–337 (KLD), and 417–419 (STG).

It belongs to the adenylosuccinate synthetase family. As to quaternary structure, homodimer. The cofactor is Mg(2+).

Its subcellular location is the cytoplasm. It catalyses the reaction IMP + L-aspartate + GTP = N(6)-(1,2-dicarboxyethyl)-AMP + GDP + phosphate + 2 H(+). It participates in purine metabolism; AMP biosynthesis via de novo pathway; AMP from IMP: step 1/2. In terms of biological role, plays an important role in the de novo pathway of purine nucleotide biosynthesis. Catalyzes the first committed step in the biosynthesis of AMP from IMP. The sequence is that of Adenylosuccinate synthetase from Koribacter versatilis (strain Ellin345).